A 337-amino-acid polypeptide reads, in one-letter code: Bifunctional methylenetetrahydrofolate dehydrogenase/cyclohydrolase, mitochondrial (337 aa).

The transit peptide at 1–30 (MATALCPLRALGQTAFRPRTRRLHLSAPRA) directs the protein to the mitochondrion. Residues 79 to 83 (YVLNK) and 126 to 128 (VQL) contribute to the substrate site. NAD(+) contacts are provided by residues 195–197 (GRS) and Arg228. Residue 304 to 308 (PGGVG) participates in substrate binding.

The protein belongs to the tetrahydrofolate dehydrogenase/cyclohydrolase family. Mg(2+) is required as a cofactor.

The protein localises to the mitochondrion. The enzyme catalyses (6R)-5,10-methylene-5,6,7,8-tetrahydrofolate + NAD(+) = (6R)-5,10-methenyltetrahydrofolate + NADH. It catalyses the reaction (6R)-5,10-methenyltetrahydrofolate + H2O = (6R)-10-formyltetrahydrofolate + H(+). In terms of biological role, although its dehydrogenase activity is NAD-specific, it can also utilize NADP at a reduced efficiency. The sequence is that of Bifunctional methylenetetrahydrofolate dehydrogenase/cyclohydrolase, mitochondrial (MTHFD2) from Gallus gallus (Chicken).